A 419-amino-acid chain; its full sequence is Arginine biosynthesis bifunctional protein ArgJ 1, mitochondrial (419 aa).

Substrate contacts are provided by Lys-177, Thr-188, Glu-275, Asn-414, and Thr-419. The active-site Nucleophile is the Thr-188.

Belongs to the ArgJ family. As to quaternary structure, heterodimer of an alpha and a beta chain. The alpha and beta chains are autoproteolytically processed from a single precursor protein within the mitochondrion.

The protein localises to the mitochondrion matrix. The enzyme catalyses N(2)-acetyl-L-ornithine + L-glutamate = N-acetyl-L-glutamate + L-ornithine. It carries out the reaction L-glutamate + acetyl-CoA = N-acetyl-L-glutamate + CoA + H(+). Its pathway is amino-acid biosynthesis; L-arginine biosynthesis; L-ornithine and N-acetyl-L-glutamate from L-glutamate and N(2)-acetyl-L-ornithine (cyclic): step 1/1. It participates in amino-acid biosynthesis; L-arginine biosynthesis; N(2)-acetyl-L-ornithine from L-glutamate: step 1/4. In terms of biological role, catalyzes two activities which are involved in the cyclic version of arginine biosynthesis: the synthesis of acetylglutamate from glutamate and acetyl-CoA, and of ornithine by transacetylation between acetylornithine and glutamate. This is Arginine biosynthesis bifunctional protein ArgJ 1, mitochondrial from Sclerotinia sclerotiorum (strain ATCC 18683 / 1980 / Ss-1) (White mold).